We begin with the raw amino-acid sequence, 431 residues long: Adenylosuccinate lyase (431 aa).

N(6)-(1,2-dicarboxyethyl)-AMP-binding positions include 4-5 (RY), 67-69 (RHD), and 93-94 (TS). Residue H141 is the Proton donor/acceptor of the active site. Q212 contributes to the N(6)-(1,2-dicarboxyethyl)-AMP binding site. The active-site Proton donor/acceptor is S262. N(6)-(1,2-dicarboxyethyl)-AMP contacts are provided by residues S263, 268-270 (KRN), and 307-311 (SVERV).

The protein belongs to the lyase 1 family. Adenylosuccinate lyase subfamily. As to quaternary structure, homooligomer. Residues from neighboring subunits contribute catalytic and substrate-binding residues to each active site.

The enzyme catalyses N(6)-(1,2-dicarboxyethyl)-AMP = fumarate + AMP. It catalyses the reaction (2S)-2-[5-amino-1-(5-phospho-beta-D-ribosyl)imidazole-4-carboxamido]succinate = 5-amino-1-(5-phospho-beta-D-ribosyl)imidazole-4-carboxamide + fumarate. It participates in purine metabolism; AMP biosynthesis via de novo pathway; AMP from IMP: step 2/2. It functions in the pathway purine metabolism; IMP biosynthesis via de novo pathway; 5-amino-1-(5-phospho-D-ribosyl)imidazole-4-carboxamide from 5-amino-1-(5-phospho-D-ribosyl)imidazole-4-carboxylate: step 2/2. Catalyzes two reactions in de novo purine nucleotide biosynthesis. Catalyzes the breakdown of 5-aminoimidazole- (N-succinylocarboxamide) ribotide (SAICAR or 2-[5-amino-1-(5-phospho-beta-D-ribosyl)imidazole-4-carboxamido]succinate) to 5-aminoimidazole-4-carboxamide ribotide (AICAR or 5-amino-1-(5-phospho-beta-D-ribosyl)imidazole-4-carboxamide) and fumarate, and of adenylosuccinate (ADS or N(6)-(1,2-dicarboxyethyl)-AMP) to adenosine monophosphate (AMP) and fumarate. This is Adenylosuccinate lyase (purB) from Synechocystis sp. (strain ATCC 27184 / PCC 6803 / Kazusa).